The primary structure comprises 736 residues: Subtilisin-like protease SBT1.9 (736 aa).

The signal sequence occupies residues 1-20 (MGMTVVIILVFSFFVAIVTA). Positions 21–101 (ETSPYIIHMD…FTKDLPVKLH (81 aa)) are cleaved as a propeptide — activation peptide. The Inhibitor I9 domain maps to 25-101 (YIIHMDLSAK…FTKDLPVKLH (77 aa)). The Peptidase S8 domain occupies 103–582 (TFSPKFIGLN…AGHVSTNKVL (480 aa)). Residue asparagine 112 is glycosylated (N-linked (GlcNAc...) asparagine). The Charge relay system role is filled by aspartate 133. N-linked (GlcNAc...) asparagine glycosylation occurs at asparagine 162. Histidine 205 acts as the Charge relay system in catalysis. N-linked (GlcNAc...) asparagine glycans are attached at residues asparagine 220, asparagine 381, and asparagine 453. One can recognise a PA domain in the interval 367 to 441 (VQFPVTYIES…VAFIGSKHRE (75 aa)). The active-site Charge relay system is serine 529. An N-linked (GlcNAc...) asparagine glycan is attached at asparagine 617.

It belongs to the peptidase S8 family.

It is found in the secreted. The polypeptide is Subtilisin-like protease SBT1.9 (Arabidopsis thaliana (Mouse-ear cress)).